The following is a 287-amino-acid chain: 4-diphosphocytidyl-2-C-methyl-D-erythritol kinase (287 aa).

K22 is an active-site residue. 102-112 serves as a coordination point for ATP; that stretch reads PAAAGIGGGSS. D139 is an active-site residue.

The protein belongs to the GHMP kinase family. IspE subfamily.

The enzyme catalyses 4-CDP-2-C-methyl-D-erythritol + ATP = 4-CDP-2-C-methyl-D-erythritol 2-phosphate + ADP + H(+). The protein operates within isoprenoid biosynthesis; isopentenyl diphosphate biosynthesis via DXP pathway; isopentenyl diphosphate from 1-deoxy-D-xylulose 5-phosphate: step 3/6. In terms of biological role, catalyzes the phosphorylation of the position 2 hydroxy group of 4-diphosphocytidyl-2C-methyl-D-erythritol. This Dinoroseobacter shibae (strain DSM 16493 / NCIMB 14021 / DFL 12) protein is 4-diphosphocytidyl-2-C-methyl-D-erythritol kinase.